A 561-amino-acid polypeptide reads, in one-letter code: MVIFKSPLPVGQHQSLEVIAPVGELALNVHLALAKQHEVKPPFIDVMSGKAWHAEEIRDRVDHLARVLAKQFGWQPNVGTPWDKVVAIYSYNTVDFIILSWAVHRLGGLCLLLHSTSSAGEIAAHLKRVQCAAIFTNEPLLATTRKARELLNGEPQKIFILDVANELLPEGHVNSDLTTVEQLAQKGAELEALEPLKWDAVNGRDQVAYLCPTSGTSGAQKLAKVTHGGLLANAVQTVAHELKTNQGKTEVGLNFLPCSHIYGMMLSHTMATRGDCMVLHPFFDLKRVLGSIARFRIERLYLVPSIISALTRNPFLLDMVDLSSVTSVVTGAAPFGSSLADGLHTLRPKWHLQPGWGLTEGGGASSLTPKDDFVPGSSGVLLPLTEVRLIGEDGKDAEGHEVRGEIYMKSPSVIAGYLEDANTQNPFTEDGWLRTGDIGMFKVSPKGVEHLWVVDRVKDMIKVKGMQVAPAELEAHLLLLPQIAEVAVIGVADKISGERPKAFIVQAKNAGPEEQLRETINQHVEATLSEPHWLGKRIEFVNDLPKTSSGKAMKSVLRAKA.

Residues 213–221 (TSGTSGAQK), 354–359 (PGWGLT), Asp437, Arg456, and Lys551 each bind ATP. Residues 284–354 (DLKRVLGSIA…TLRPKWHLQP (71 aa)) form an SBD1 region. The segment at 355-417 (GWGLTEGGGA…MKSPSVIAGY (63 aa)) is SBD2.

This sequence belongs to the ATP-dependent AMP-binding enzyme family.

It participates in antifungal biosynthesis. Its function is as follows. Acyl-CoA ligase; part of the gene cluster that mediates the biosynthesis of the antifungal antibiotic FR901469, an inhibitor of beta-1,3-glucansynthase, exerting antifungal activity against the pathogenes Candida albicans and Aspergillus fumigatus. FR901469 is a cyclic depsipeptide containing 12 amino acid residues and a fatty acid chain. The NRPS frbI contains 12 modules responsible for the formation of the depsipeptide backbone which is denoted as Acyl-Thr-Ala-Tyr-Val-4OHPro-Thr-Thr-3OHPro-threo3OHGln-Gly-Thr-Orn-OH (C71H116N14O23). The PKS frbB is probably involved in the production of the hydrocarbon chain, and the acyl-CoA ligase frbC might be involved in the transport of the chain to the peptide ptoduct of frbI. Because FR901469 contains 3 hydroxylated amino acid residues, the 3 oxygenases frbA, frbH, and frbJ might be participating in amino acid hydroxylation. As no thioesterase domains were detected in frbI or frbB, the thioesterases frbD and frbE may instead release and cyclize the products of the NRPS and PKS, respectively. The polypeptide is Acyl-CoA ligase frbB (Dothideomycetidae sp. (strain 11243) (Fungal sp. (strain No.11243))).